We begin with the raw amino-acid sequence, 853 residues long: cGMP-dependent protein kinase (853 aa).

The autoinhibitory segment stretch occupies residues 1–29 (MEEDDNLKKGNERNKKKAIFSNDDFTGED). CNMP-binding domain regions lie at residues 58-173 (VCST…FIDS), 176-275 (VFDM…IVLG), 295-398 (IFKQ…LGNN), and 418-517 (IFRY…LQII). The 3',5'-cyclic GMP site is built by lysine 113, glycine 122, glutamate 123, alanine 125, arginine 132, and serine 133. The 3',5'-cyclic GMP site is built by arginine 473, glycine 482, glutamate 483, alanine 485, arginine 492, and threonine 493. One can recognise a Protein kinase domain in the interval 541 to 798 (LETERIIGRG…FKDIKDHPFF (258 aa)). Residues 547–555 (IGRGTFGTV) and lysine 570 each bind ATP. Aspartate 664 functions as the Proton acceptor in the catalytic mechanism. Residues 799–853 (SNFNWDKLAGRLLDPPLVSKSETYAEDIDIKQIEEEDAEDDEEPLNDEDNWDIDF) enclose the AGC-kinase C-terminal domain. Residues 827–853 (DIKQIEEEDAEDDEEPLNDEDNWDIDF) form a disordered region. Acidic residues predominate over residues 832-853 (EEEDAEDDEEPLNDEDNWDIDF).

This sequence belongs to the protein kinase superfamily. AGC Ser/Thr protein kinase family. cGMP subfamily. Monomer. Mg(2+) is required as a cofactor. In terms of processing, autophosphorylated.

Its subcellular location is the cytoplasm. It localises to the endoplasmic reticulum membrane. It catalyses the reaction L-seryl-[protein] + ATP = O-phospho-L-seryl-[protein] + ADP + H(+). It carries out the reaction L-threonyl-[protein] + ATP = O-phospho-L-threonyl-[protein] + ADP + H(+). With respect to regulation, activated by cGMP. Not activated by cAMP. cGMP binding allosterically triggers a conformational change at the alpha C-helix of cGMP-binding domain 4, which bridges the regulatory and catalytic domains, causing the capping triad, composed of Arg-484, Gln-532 and Asp-533, to form and stabilize the active conformation. The cGMP-binding domains acts cooperatively to activate PKG. In terms of biological role, serine/threonine protein kinase which acts as a downstream effector of the second messenger cGMP. Controls the release of Ca(2+) from intracellular stores by regulating phosphoinositide biosynthesis. Ca(2+) signals are essential for merozoite and sporozoite invasion and egress from host hepatocytes and erythrocytes, and, in the mosquito vector, for gametocyte activation, and ookinete and sporozoite motility. During the host liver stage, regulates the initial invasion of host hepatocytes by sporozoites by regulating sporozoite motility and microneme exocytosis. Following parasite development in the hepatocytes, required for the release of merosomes, a vesicle containing the mature merozoites. During the asexual blood stage, required for the progression from schizont to the ring stage following merozoite invasion of host erythrocytes and for merozoite egress. Regulates merozoite egress by promoting the release of exonemes and micronemes which contain proteins essential for egress. Phosphorylates CDPK1 predominantly at the late schizont stage; phosphorylation at 'Ser-64' regulates CDPK1 protein-protein interaction and phosphorylation at 'Thr-231' may regulate CDPK1 kinase activity. In the mosquito vector, required for the initiation of gametogenesis induced by xanthurenic acid, specifically the gametocyte differentiation from the crescent-shaped form to the spherical form. Required for the gliding motility of ookinetes to reach and penetrate the midgut epithelium by promoting Ca(2+)-mediated activation of CDPK1 and CDPK4. Also required for microneme secretion in ookinete by promoting Ca(2+)-mediated activation of CDPK3. This Plasmodium falciparum (isolate NF54) protein is cGMP-dependent protein kinase.